Consider the following 427-residue polypeptide: Acetyl-CoA acetyltransferase, mitochondrial (427 aa).

A mitochondrion-targeting transit peptide spans 1–33 (MAVLAALLRGGARSRSPLLRRLVQEIRYVERSY). The residue at position 66 (Lys-66) is an N6-acetyllysine; alternate. The residue at position 66 (Lys-66) is an N6-succinyllysine; alternate. Lys-78 is subject to N6-succinyllysine. Residue Cys-126 is the Acyl-thioester intermediate of the active site. Residues Lys-174, Lys-181, Lys-190, and Lys-202 each carry the N6-acetyllysine; alternate modification. Residues Lys-174, Lys-181, Lys-190, and Lys-202 each carry the N6-succinyllysine; alternate modification. Residue Tyr-219 coordinates CoA. Residue Tyr-219 coordinates K(+). 2 positions are modified to N6-acetyllysine; alternate: Lys-223 and Lys-230. An N6-succinyllysine; alternate mark is found at Lys-223 and Lys-230. Lys-243 bears the N6-succinyllysine mark. Residues Lys-251 and Lys-257 each carry the N6-acetyllysine modification. Residues 258–260 (RVD) and Lys-263 each bind CoA. Lys-263 is modified (N6-acetyllysine; alternate). Lys-263 carries the N6-succinyllysine; alternate modification. N6-succinyllysine is present on residues Lys-266 and Lys-268. Lys-273 carries the N6-acetyllysine modification. Ala-280, Ala-281, and Ala-283 together coordinate K(+). Ser-284 provides a ligand contact to CoA. The residue at position 338 (Lys-338) is an N6-acetyllysine. A K(+)-binding site is contributed by Val-381. Catalysis depends on Cys-413, which acts as the Proton donor/acceptor.

Belongs to the thiolase-like superfamily. Thiolase family. In terms of assembly, homotetramer. Succinylation at Lys-268, adjacent to a coenzyme A binding site. Desuccinylated by SIRT5.

The protein resides in the mitochondrion. It catalyses the reaction 2 acetyl-CoA = acetoacetyl-CoA + CoA. It carries out the reaction propanoyl-CoA + acetyl-CoA = 2-methyl-3-oxobutanoyl-CoA + CoA. It participates in lipid metabolism; fatty acid beta-oxidation. With respect to regulation, activated by potassium ions, but not sodium ions. This is one of the enzymes that catalyzes the last step of the mitochondrial beta-oxidation pathway, an aerobic process breaking down fatty acids into acetyl-CoA. Using free coenzyme A/CoA, catalyzes the thiolytic cleavage of medium- to long-chain 3-oxoacyl-CoAs into acetyl-CoA and a fatty acyl-CoA shortened by two carbon atoms. The activity of the enzyme is reversible and it can also catalyze the condensation of two acetyl-CoA molecules into acetoacetyl-CoA. Thereby, it plays a major role in ketone body metabolism. In Macaca fascicularis (Crab-eating macaque), this protein is Acetyl-CoA acetyltransferase, mitochondrial (ACAT1).